The following is a 344-amino-acid chain: Phosphoribosylformylglycinamidine cyclo-ligase (344 aa).

The protein belongs to the AIR synthase family.

The protein localises to the cytoplasm. It carries out the reaction 2-formamido-N(1)-(5-O-phospho-beta-D-ribosyl)acetamidine + ATP = 5-amino-1-(5-phospho-beta-D-ribosyl)imidazole + ADP + phosphate + H(+). It participates in purine metabolism; IMP biosynthesis via de novo pathway; 5-amino-1-(5-phospho-D-ribosyl)imidazole from N(2)-formyl-N(1)-(5-phospho-D-ribosyl)glycinamide: step 2/2. This is Phosphoribosylformylglycinamidine cyclo-ligase from Leptospira interrogans serogroup Icterohaemorrhagiae serovar Lai (strain 56601).